Here is a 264-residue protein sequence, read N- to C-terminus: ATP synthase subunit a (264 aa).

5 helical membrane passes run 39–59, 97–117, 139–159, 205–225, and 239–259; these read LDTLIISVVLGALFILIFYIV, VAPLALTIFIWVFLMNFMDLV, TADPTLTFAMSITVFVLVIFY, LFGNLFAGELIFILIALLPWW, and LLVITVQAFIFMMLTVVYISL.

The protein belongs to the ATPase A chain family. In terms of assembly, F-type ATPases have 2 components, CF(1) - the catalytic core - and CF(0) - the membrane proton channel. CF(1) has five subunits: alpha(3), beta(3), gamma(1), delta(1), epsilon(1). CF(0) has three main subunits: a(1), b(2) and c(9-12). The alpha and beta chains form an alternating ring which encloses part of the gamma chain. CF(1) is attached to CF(0) by a central stalk formed by the gamma and epsilon chains, while a peripheral stalk is formed by the delta and b chains.

The protein resides in the cell inner membrane. Functionally, key component of the proton channel; it plays a direct role in the translocation of protons across the membrane. The polypeptide is ATP synthase subunit a (Coxiella burnetii (strain RSA 331 / Henzerling II)).